The sequence spans 382 residues: ATP phosphoribosyltransferase regulatory subunit (382 aa).

It belongs to the class-II aminoacyl-tRNA synthetase family. HisZ subfamily. As to quaternary structure, heteromultimer composed of HisG and HisZ subunits.

Its subcellular location is the cytoplasm. It participates in amino-acid biosynthesis; L-histidine biosynthesis; L-histidine from 5-phospho-alpha-D-ribose 1-diphosphate: step 1/9. Functionally, required for the first step of histidine biosynthesis. May allow the feedback regulation of ATP phosphoribosyltransferase activity by histidine. The sequence is that of ATP phosphoribosyltransferase regulatory subunit from Burkholderia vietnamiensis (strain G4 / LMG 22486) (Burkholderia cepacia (strain R1808)).